The chain runs to 515 residues: Histidine ammonia-lyase (515 aa).

Residues 148-150 (ASG) constitute a cross-link (5-imidazolinone (Ala-Gly)). Ser149 carries the 2,3-didehydroalanine (Ser) modification.

It belongs to the PAL/histidase family. Post-translationally, contains an active site 4-methylidene-imidazol-5-one (MIO), which is formed autocatalytically by cyclization and dehydration of residues Ala-Ser-Gly.

The protein resides in the cytoplasm. It carries out the reaction L-histidine = trans-urocanate + NH4(+). It participates in amino-acid degradation; L-histidine degradation into L-glutamate; N-formimidoyl-L-glutamate from L-histidine: step 1/3. In Pseudomonas syringae pv. tomato (strain ATCC BAA-871 / DC3000), this protein is Histidine ammonia-lyase.